Consider the following 180-residue polypeptide: Endoribonuclease YbeY (180 aa).

3 residues coordinate Zn(2+): His149, His153, and His159.

The protein belongs to the endoribonuclease YbeY family. Requires Zn(2+) as cofactor.

It localises to the cytoplasm. In terms of biological role, single strand-specific metallo-endoribonuclease involved in late-stage 70S ribosome quality control and in maturation of the 3' terminus of the 16S rRNA. This Prochlorococcus marinus (strain MIT 9515) protein is Endoribonuclease YbeY.